The chain runs to 1194 residues: Multidrug efflux ATP-binding/permease protein BCG_0231 (1194 aa).

A run of 6 helical transmembrane segments spans residues Leu20 to Val40, Leu56 to Val76, Leu130 to Val150, Trp153 to Ala173, Phe258 to Phe278, and Trp279 to Ala299. In terms of domain architecture, ABC transmembrane type-1 1 spans Leu21–Gln301. Positions Leu334 to Pro568 constitute an ABC transporter 1 domain. Residue Gly367 to Ser374 participates in ATP binding. The next 6 membrane-spanning stretches (helical) occupy residues Ala628–Ile648, Val660–Val680, Leu743–Ile763, Ala765–Phe785, Leu847–Leu867, and Val878–Ile898. One can recognise an ABC transmembrane type-1 2 domain in the interval Ala628–Arg910. The ABC transporter 2 domain occupies Val942–Ala1177. Gly976 to Ser983 is an ATP binding site.

This sequence belongs to the ABC transporter superfamily. Lipid exporter (TC 3.A.1.106) family.

The protein localises to the cell inner membrane. Functionally, overexpression increases resistance to chloramphenicol, ampicillin, streptomycin, tetracyclin and vancomycin. The polypeptide is Multidrug efflux ATP-binding/permease protein BCG_0231 (Mycobacterium bovis (strain BCG / Pasteur 1173P2)).